The sequence spans 88 residues: Small ribosomal subunit protein bS20 (88 aa).

The disordered stretch occupies residues 1-23 (MANSPQAKKRARQNDKARAHNAS).

This sequence belongs to the bacterial ribosomal protein bS20 family.

Functionally, binds directly to 16S ribosomal RNA. The sequence is that of Small ribosomal subunit protein bS20 from Saccharophagus degradans (strain 2-40 / ATCC 43961 / DSM 17024).